The following is a 166-amino-acid chain: D-aminoacyl-tRNA deacylase (166 aa).

A Gly-cisPro motif, important for rejection of L-amino acids motif is present at residues 142–143 (GP).

Belongs to the DTD family. In terms of assembly, homodimer.

It is found in the cytoplasm. It carries out the reaction glycyl-tRNA(Ala) + H2O = tRNA(Ala) + glycine + H(+). The catalysed reaction is a D-aminoacyl-tRNA + H2O = a tRNA + a D-alpha-amino acid + H(+). In terms of biological role, an aminoacyl-tRNA editing enzyme that deacylates mischarged D-aminoacyl-tRNAs. Also deacylates mischarged glycyl-tRNA(Ala), protecting cells against glycine mischarging by AlaRS. Acts via tRNA-based rather than protein-based catalysis; rejects L-amino acids rather than detecting D-amino acids in the active site. By recycling D-aminoacyl-tRNA to D-amino acids and free tRNA molecules, this enzyme counteracts the toxicity associated with the formation of D-aminoacyl-tRNA entities in vivo and helps enforce protein L-homochirality. In Ralstonia nicotianae (strain ATCC BAA-1114 / GMI1000) (Ralstonia solanacearum), this protein is D-aminoacyl-tRNA deacylase.